The following is a 340-amino-acid chain: Uroporphyrinogen decarboxylase (340 aa).

Substrate contacts are provided by residues 21–25 (RQAGR), F40, D71, Y147, S202, and H316.

The protein belongs to the uroporphyrinogen decarboxylase family. In terms of assembly, homodimer.

It is found in the cytoplasm. The catalysed reaction is uroporphyrinogen III + 4 H(+) = coproporphyrinogen III + 4 CO2. Its pathway is porphyrin-containing compound metabolism; protoporphyrin-IX biosynthesis; coproporphyrinogen-III from 5-aminolevulinate: step 4/4. Its function is as follows. Catalyzes the decarboxylation of four acetate groups of uroporphyrinogen-III to yield coproporphyrinogen-III. The chain is Uroporphyrinogen decarboxylase from Wolinella succinogenes (strain ATCC 29543 / DSM 1740 / CCUG 13145 / JCM 31913 / LMG 7466 / NCTC 11488 / FDC 602W) (Vibrio succinogenes).